A 230-amino-acid chain; its full sequence is Ion-translocating oxidoreductase complex subunit E (230 aa).

6 consecutive transmembrane segments (helical) span residues 18–38, 39–59, 63–83, 86–106, 125–145, and 182–202; these read ALVQ…ATNA, LGLG…VSAL, TPAE…VSAV, LINA…PLIV, WLSA…MFVL, and PFLL…MLAV.

The protein belongs to the NqrDE/RnfAE family. As to quaternary structure, the complex is composed of six subunits: RsxA, RsxB, RsxC, RsxD, RsxE and RsxG.

The protein localises to the cell inner membrane. Functionally, part of a membrane-bound complex that couples electron transfer with translocation of ions across the membrane. Required to maintain the reduced state of SoxR. This Salmonella dublin (strain CT_02021853) protein is Ion-translocating oxidoreductase complex subunit E.